Here is a 241-residue protein sequence, read N- to C-terminus: tRNA pseudouridine synthase A (241 aa).

The active-site Nucleophile is the aspartate 52. Tyrosine 111 is a binding site for substrate.

Belongs to the tRNA pseudouridine synthase TruA family. As to quaternary structure, homodimer.

It carries out the reaction uridine(38/39/40) in tRNA = pseudouridine(38/39/40) in tRNA. Its function is as follows. Formation of pseudouridine at positions 38, 39 and 40 in the anticodon stem and loop of transfer RNAs. In Ureaplasma parvum serovar 3 (strain ATCC 27815 / 27 / NCTC 11736), this protein is tRNA pseudouridine synthase A.